The chain runs to 242 residues: Pyridoxine 5'-phosphate synthase (242 aa).

N6 provides a ligand contact to 3-amino-2-oxopropyl phosphate. 8-9 (DH) serves as a coordination point for 1-deoxy-D-xylulose 5-phosphate. R17 contacts 3-amino-2-oxopropyl phosphate. Catalysis depends on H42, which acts as the Proton acceptor. Positions 44 and 49 each coordinate 1-deoxy-D-xylulose 5-phosphate. E69 (proton acceptor) is an active-site residue. T99 contacts 1-deoxy-D-xylulose 5-phosphate. The active-site Proton donor is the H190. Residues G191 and 212 to 213 (GH) each bind 3-amino-2-oxopropyl phosphate.

It belongs to the PNP synthase family. In terms of assembly, homooctamer; tetramer of dimers.

The protein localises to the cytoplasm. It catalyses the reaction 3-amino-2-oxopropyl phosphate + 1-deoxy-D-xylulose 5-phosphate = pyridoxine 5'-phosphate + phosphate + 2 H2O + H(+). It functions in the pathway cofactor biosynthesis; pyridoxine 5'-phosphate biosynthesis; pyridoxine 5'-phosphate from D-erythrose 4-phosphate: step 5/5. Its function is as follows. Catalyzes the complicated ring closure reaction between the two acyclic compounds 1-deoxy-D-xylulose-5-phosphate (DXP) and 3-amino-2-oxopropyl phosphate (1-amino-acetone-3-phosphate or AAP) to form pyridoxine 5'-phosphate (PNP) and inorganic phosphate. The polypeptide is Pyridoxine 5'-phosphate synthase (Neisseria meningitidis serogroup A / serotype 4A (strain DSM 15465 / Z2491)).